We begin with the raw amino-acid sequence, 421 residues long: Lipid II:glycine glycyltransferase (421 aa).

It belongs to the FemABX family. In terms of assembly, monomer.

Its subcellular location is the cytoplasm. It carries out the reaction beta-D-GlcNAc-(1-&gt;4)-Mur2Ac(oyl-L-Ala-D-isoglutaminyl-L-Lys-D-Ala-D-Ala)-di-trans,octa-cis-undecaprenyl diphosphate + glycyl-tRNA(Gly) = beta-D-GlcNAc-(1-&gt;4)-Mur2Ac(oyl-L-Ala-D-isoglutaminyl-L-Lys-(N(6)-Gly)-D-Ala-D-Ala)-di-trans,octa-cis-undecaprenyl diphosphate + tRNA(Gly) + H(+). Functionally, catalyzes the incorporation of the first glycine of the pentaglycine interpeptide bridge, which is characteristic of the S.aureus peptidoglycan. This glycine is added to the epsilon-amino group of the L-lysine of the membrane-bound lipid II intermediate (GlcNAc-(beta-1,4)-N-acetylmuramic acid(-L-Ala-D-iGln-L-Lys-D-Ala-D-Ala)-pyrophosphoryl-undecaprenol), using glycyl-tRNA(Gly) as donor, in a ribosome-independent mechanism. In Staphylococcus aureus (strain MSSA476), this protein is Lipid II:glycine glycyltransferase (femX).